Consider the following 393-residue polypeptide: Myb-related transcription factor, partner of profilin (393 aa).

Positions 1–11 (MASATAAAAPG) are enriched in low complexity. A disordered region spans residues 1-21 (MASATAAAAPGEAEETTRLRK). Positions 16–88 (TTRLRKPRFS…EVQKRWNDFK (73 aa)) constitute a Myb-like domain. A Nuclear localization signal motif is present at residues 87–90 (FKRR). Disordered regions lie at residues 125-254 (GPGV…EQSL), 290-323 (PLLPGTPADPLPPPPPPPPPPPPKPVLPPSAPKV), and 348-393 (IISP…WKSP). Residues 142 to 157 (AAASSQPQASTASTQR) show a composition bias toward low complexity. Basic and acidic residues predominate over residues 160–171 (LSEDRRQDRRAD). Over residues 173 to 184 (PAQSKGGSSSPE) the composition is skewed to polar residues. Composition is skewed to pro residues over residues 219–229 (PPLPAPPPPPT), 238–247 (SPSPTPPRPT), 296–320 (PADPLPPPPPPPPPPPPKPVLPPSA), and 359–368 (KPLPPAPPLP). Residues 375 to 393 (HKRRKGFPTRKRRGRWKSP) are compositionally biased toward basic residues. 2 consecutive short sequence motifs (nuclear localization signal) follow at residues 376–379 (KRRK) and 384–387 (RKRR).

In terms of assembly, interacts with PFN1. Homodimer and heterodimer with PFN1. In terms of tissue distribution, ubiquitous. Highly expressed in brain, liver and testis. Moderate expression in heart, lung and skeletal muscle. Low expression in spleen and kidney.

The protein resides in the nucleus. Its function is as follows. Transcriptional repressor; DNA-binding protein that specifically recognizes the core sequence 5'-YAAC[GT]G-3'. Dimerization with PFN1 reduces its DNA-binding capacity. This chain is Myb-related transcription factor, partner of profilin (Mypop), found in Mus musculus (Mouse).